The chain runs to 231 residues: MIKAIRSAISFLTTLPLGGDVEELRKNLWLFPYAAILIALIVSVPHFIRNFVDIRFLALVLYLGAEGINHVDGLADFGDALFAPKNRKREAIKDLNTGAGGVAVVVVYFLLLYTLLYRSDFWEIALSQVLAKYSMLLLMLLSRPSWDGMGSYFMEKISSKDVFIGAVPVVLLCYKVGIESLAALASGFAVVLLLKAYSEKHFGGVNGDVIGSANCLTFAASLSALTIAGQL.

Helical transmembrane passes span 28-48, 97-117, 121-141, 162-182, and 209-229; these read LWLF…PHFI, TGAG…TLLY, FWEI…LMLL, VFIG…ESLA, and VIGS…TIAG.

It belongs to the CobS family. It depends on Mg(2+) as a cofactor.

It is found in the cell membrane. The enzyme catalyses alpha-ribazole + adenosylcob(III)inamide-GDP = adenosylcob(III)alamin + GMP + H(+). It carries out the reaction alpha-ribazole 5'-phosphate + adenosylcob(III)inamide-GDP = adenosylcob(III)alamin 5'-phosphate + GMP + H(+). Its pathway is cofactor biosynthesis; adenosylcobalamin biosynthesis; adenosylcobalamin from cob(II)yrinate a,c-diamide: step 7/7. Functionally, joins adenosylcobinamide-GDP and alpha-ribazole to generate adenosylcobalamin (Ado-cobalamin). Also synthesizes adenosylcobalamin 5'-phosphate from adenosylcobinamide-GDP and alpha-ribazole 5'-phosphate. The protein is Adenosylcobinamide-GDP ribazoletransferase (cobS2) of Archaeoglobus fulgidus (strain ATCC 49558 / DSM 4304 / JCM 9628 / NBRC 100126 / VC-16).